Here is a 318-residue protein sequence, read N- to C-terminus: 2-keto-3-deoxygluconate permease (318 aa).

10 helical membrane passes run 10–30 (LPGG…TLWP), 42–62 (GLIS…GATI), 82–102 (IAMA…GGVP), 109–129 (LSVL…YAAL), 139–159 (AGAV…LILG), 163–183 (LASF…LGFA), 194–214 (FFAQ…GNTL), 224–244 (ASGV…LLLA), 257–277 (VAAS…AGMA), and 289–309 (ALVA…TALY).

Belongs to the KdgT transporter family.

The protein resides in the cell inner membrane. It carries out the reaction 2-dehydro-3-deoxy-D-gluconate(in) + H(+)(in) = 2-dehydro-3-deoxy-D-gluconate(out) + H(+)(out). Its function is as follows. Catalyzes the proton-dependent uptake of 2-keto-3-deoxygluconate (KDG) into the cell. This Xanthomonas euvesicatoria pv. vesicatoria (strain 85-10) (Xanthomonas campestris pv. vesicatoria) protein is 2-keto-3-deoxygluconate permease.